The sequence spans 1842 residues: Plexin-B2 (1842 aa).

A signal peptide spans 1 to 19; that stretch reads MALPLWALTFLGLTGLGLS. The region spanning 20–468 is the Sema domain; that stretch reads LRSRKPESFR…TQDKVFRLPV (449 aa). Residues 20–1201 are Extracellular-facing; sequence LRSRKPESFR…EYDTRASDVP (1182 aa). Disulfide bonds link cysteine 78-cysteine 87 and cysteine 112-cysteine 120. 2 N-linked (GlcNAc...) asparagine glycosylation sites follow: asparagine 127 and asparagine 242. Intrachain disulfides connect cysteine 250–cysteine 366, cysteine 266–cysteine 313, and cysteine 331–cysteine 353. N-linked (GlcNAc...) asparagine glycans are attached at residues asparagine 393 and asparagine 451. Intrachain disulfides connect cysteine 471–cysteine 488, cysteine 477–cysteine 520, cysteine 480–cysteine 497, cysteine 491–cysteine 503, and cysteine 557–cysteine 576. Asparagine 798 carries N-linked (GlcNAc...) asparagine glycosylation. IPT/TIG domains lie at 806–895, 898–982, and 986–1095; these read PVIT…QFTY, PQPL…SFTY, and PMIR…VFEY. N-linked (GlcNAc...) asparagine glycans are attached at residues asparagine 919, asparagine 1053, and asparagine 1072. The chain crosses the membrane as a helical span at residues 1202 to 1222; it reads LSLILPLVMVPMVFIIVVSIY. The Cytoplasmic portion of the chain corresponds to 1223-1842; it reads CYWRKSQQAE…AALENKVTDL (620 aa). Phosphoserine occurs at positions 1240, 1248, and 1574.

It belongs to the plexin family. In terms of assembly, monomer, and heterodimer with PLXNB1. Interacts with MET, ARHGEF11 and ARHGEF12. May also interact with MST1R. As to expression, detected in macrophages from spleen and bone marrow (at protein level). Detected in granule cells in the developing cerebellum, dentate gyrus and olfactory bulb. Expressed in neurons and glia in the developing hippocampus.

It is found in the cell membrane. Cell surface receptor for SEMA4C, SEMA4D and SEMA4G that plays an important role in cell-cell signaling. Plays a role in glutamatergic synapse development and is required for SEMA4A-mediated excitatory synapse development. Binding to class 4 semaphorins promotes downstream activation of RHOA and phosphorylation of ERBB2 at 'Tyr-1248'. Also acts as a cell surface receptor for angiogenin (ANG); promoting ANG endocytosis and translocation to the cytoplasm or nucleus. Required for normal differentiation and migration of neuronal cells during brain corticogenesis and for normal embryonic brain development. Regulates the migration of cerebellar granule cells in the developing brain. Plays a role in RHOA activation and subsequent changes of the actin cytoskeleton. Plays a role in axon guidance, invasive growth and cell migration. May modulate the activity of RAC1 and CDC42. Down-regulates macrophage migration in wound-healing assays (in vitro). The sequence is that of Plexin-B2 from Mus musculus (Mouse).